The following is a 189-amino-acid chain: Endoribonuclease YbeY (189 aa).

A compositionally biased stretch (polar residues) spans 1-10 (MKERSSSPGT). Positions 1 to 23 (MKERSSSPGTPDSGRRARPKPAK) are disordered. 3 residues coordinate Zn(2+): histidine 141, histidine 145, and histidine 151.

This sequence belongs to the endoribonuclease YbeY family. It depends on Zn(2+) as a cofactor.

It localises to the cytoplasm. Functionally, single strand-specific metallo-endoribonuclease involved in late-stage 70S ribosome quality control and in maturation of the 3' terminus of the 16S rRNA. The polypeptide is Endoribonuclease YbeY (Nitrosospira multiformis (strain ATCC 25196 / NCIMB 11849 / C 71)).